Here is a 137-residue protein sequence, read N- to C-terminus: Probable Hsp20 family chaperone (137 aa).

The 113-residue stretch at 25–137 (LTNNNNIMKT…PKEKHYIKLN (113 aa)) folds into the sHSP domain.

It belongs to the small heat shock protein (HSP20) family.

Probable chaperone. This is Probable Hsp20 family chaperone from Onion yellows phytoplasma (strain OY-M).